A 741-amino-acid polypeptide reads, in one-letter code: Zinc finger protein 425 (741 aa).

Residues 1 to 69 enclose the KRAB domain; sequence DDVALYFSGQ…EQGCLDKTRR (69 aa). Disordered regions lie at residues 67–86 and 128–169; these read TRRT…DTGK and RRDT…TPGR. Positions 132–151 are enriched in polar residues; that stretch reads FQSPSLQETEIPNKKVSITA. Residues 153–168 are compositionally biased toward basic and acidic residues; that stretch reads DPDKKDLRHKPRETPG. C2H2-type zinc fingers lie at residues 179-201, 235-257, 263-285, 291-313, 319-341, 347-369, 375-397, 403-425, 431-453, 459-481, 487-509, 515-537, 543-565, 571-593, 599-621, 627-649, 655-677, 683-705, and 711-733; these read YSCY…KRSH, FQCS…QVVH, YPCP…LCLH, FCCG…LRLH, FQCP…LSQH, FHCP…QRTH, FSCD…IRVH, FSCP…GLQH, FQCP…QRLH, FPCA…TRVH, FPCG…LKVH, FSCA…TRLH, FQCP…QRMH, FACS…LRLH, YQCP…LLQH, FSCV…IRVH, FQCP…LYTH, FQCP…LCLH, and FSCD…IAVH.

It belongs to the krueppel C2H2-type zinc-finger protein family.

It is found in the nucleus. Its subcellular location is the cytoplasm. Acts as a transcriptional repressor. The polypeptide is Zinc finger protein 425 (ZNF425) (Macaca fascicularis (Crab-eating macaque)).